Consider the following 306-residue polypeptide: ADP,ATP carrier protein ER-ANT1 (306 aa).

Solcar repeat units follow at residues 8–101, 113–205, and 213–299; these read ERFS…FKNL, KWFA…IKPI, and GNFL…LHQI. 5 helical membrane passes run 10 to 37, 78 to 102, 111 to 131, 181 to 202, and 216 to 236; these read FSADFVMGGAAAIVAKSAAAPIERVKLL, QANVIRYFPTQASNFAFKGYFKNLL, YLKWFAGNVASGSAAGATTSL, FGVSIVGITLYRGMYFGMYDTI, and LASFLLGWSITTSAGVIAYPF. ADP-binding residues include Arg-83 and Lys-95. Residue Arg-240 coordinates ADP. The important for transport activity stretch occupies residues 240–245; the sequence is RRRMML. The short motif at 240–245 is the Nucleotide carrier signature motif element; the sequence is RRRMML. A helical membrane pass occupies residues 276 to 296; sequence VTANMLLGVAGAGVLAGYDQL.

The protein belongs to the mitochondrial carrier (TC 2.A.29) family.

Its subcellular location is the endoplasmic reticulum membrane. It catalyses the reaction ADP(in) + ATP(out) = ADP(out) + ATP(in). Its function is as follows. ADP:ATP antiporter that catalyzes the exchange of ADP and ATP across the endoplasmic reticulum membrane. This Arabidopsis thaliana (Mouse-ear cress) protein is ADP,ATP carrier protein ER-ANT1 (ER-ANT1).